Here is a 150-residue protein sequence, read N- to C-terminus: Large ribosomal subunit protein uL13 (150 aa).

The protein belongs to the universal ribosomal protein uL13 family. As to quaternary structure, part of the 50S ribosomal subunit.

In terms of biological role, this protein is one of the early assembly proteins of the 50S ribosomal subunit, although it is not seen to bind rRNA by itself. It is important during the early stages of 50S assembly. This chain is Large ribosomal subunit protein uL13, found in Chlamydia muridarum (strain MoPn / Nigg).